Here is a 348-residue protein sequence, read N- to C-terminus: Phospho-2-dehydro-3-deoxyheptonate aldolase, Trp-sensitive (348 aa).

It belongs to the class-I DAHP synthase family.

It carries out the reaction D-erythrose 4-phosphate + phosphoenolpyruvate + H2O = 7-phospho-2-dehydro-3-deoxy-D-arabino-heptonate + phosphate. It participates in metabolic intermediate biosynthesis; chorismate biosynthesis; chorismate from D-erythrose 4-phosphate and phosphoenolpyruvate: step 1/7. Its function is as follows. Stereospecific condensation of phosphoenolpyruvate (PEP) and D-erythrose-4-phosphate (E4P) giving rise to 3-deoxy-D-arabino-heptulosonate-7-phosphate (DAHP). This is Phospho-2-dehydro-3-deoxyheptonate aldolase, Trp-sensitive (aroH) from Buchnera aphidicola subsp. Schizaphis graminum (strain Sg).